The following is an 87-amino-acid chain: uncharacterized protein (87 aa).

The signal sequence occupies residues 1 to 25 (MKIRKILLSSALSFGMLISAVPALA).

This is an uncharacterized protein from Bacillus subtilis (strain 168).